The sequence spans 417 residues: Serine hydroxymethyltransferase (417 aa).

(6S)-5,6,7,8-tetrahydrofolate-binding positions include L112 and 116–118; that span reads GHL. Residue K221 is modified to N6-(pyridoxal phosphate)lysine. Residue E247 coordinates (6S)-5,6,7,8-tetrahydrofolate.

The protein belongs to the SHMT family. As to quaternary structure, homodimer. The cofactor is pyridoxal 5'-phosphate.

It is found in the cytoplasm. The enzyme catalyses (6R)-5,10-methylene-5,6,7,8-tetrahydrofolate + glycine + H2O = (6S)-5,6,7,8-tetrahydrofolate + L-serine. It participates in one-carbon metabolism; tetrahydrofolate interconversion. The protein operates within amino-acid biosynthesis; glycine biosynthesis; glycine from L-serine: step 1/1. In terms of biological role, catalyzes the reversible interconversion of serine and glycine with tetrahydrofolate (THF) serving as the one-carbon carrier. This reaction serves as the major source of one-carbon groups required for the biosynthesis of purines, thymidylate, methionine, and other important biomolecules. Also exhibits THF-independent aldolase activity toward beta-hydroxyamino acids, producing glycine and aldehydes, via a retro-aldol mechanism. This is Serine hydroxymethyltransferase from Borrelia hermsii (strain HS1 / DAH).